The primary structure comprises 186 residues: Signal peptidase I (186 aa).

The Cytoplasmic segment spans residues Met1–Ala19. Residues Ile20 to Val40 form a helical membrane-spanning segment. Topologically, residues Glu41–Asp186 are extracellular. Active-site residues include Ser44 and Lys86.

Belongs to the peptidase S26 family.

It is found in the cell membrane. The catalysed reaction is Cleavage of hydrophobic, N-terminal signal or leader sequences from secreted and periplasmic proteins.. The chain is Signal peptidase I (lepB) from Bacillus licheniformis.